A 679-amino-acid chain; its full sequence is Protein CASP (679 aa).

At 1-614 (MDTSVYSHAL…VILQNKMTRM (614 aa)) the chain is on the cytoplasmic side. Coiled-coil stretches lie at residues 14 to 90 (AKAD…EKVL) and 178 to 341 (RNWK…NYSD). Serine 364 is modified (phosphoserine). Residues 385–444 (ANKKLQATLAEYRSKSTAQEEERNELKKSVDQLKQQIATLKEANEKLETDLEKVENVSPH) are a coiled coil. Phosphoserine occurs at positions 450 and 453. Residues 492–540 (IVTKQRDRFRSRNMDLEKQLRQGNSEKGKLKLEISKLKGDNTKLYERIR) are a coiled coil. A Phosphoserine modification is found at serine 555. The helical; Anchor for type IV membrane protein transmembrane segment at 615–635 (VFLFYCIGLHGLVFMMSMYVI) threads the bilayer. Over 636–679 (NISGYMTPEVGIVQSAKSSSNLNGGLGGAEKVAAGVGSVHGINR) the chain is Lumenal.

Belongs to the CASP family.

The protein localises to the golgi apparatus membrane. May be involved in intra-Golgi transport. In Saccharomyces cerevisiae (strain ATCC 204508 / S288c) (Baker's yeast), this protein is Protein CASP (COY1).